A 153-amino-acid polypeptide reads, in one-letter code: Aspartate carbamoyltransferase regulatory chain (153 aa).

Zn(2+)-binding residues include Cys109, Cys114, Cys138, and Cys141.

The protein belongs to the PyrI family. As to quaternary structure, contains catalytic and regulatory chains. Zn(2+) is required as a cofactor.

Its function is as follows. Involved in allosteric regulation of aspartate carbamoyltransferase. The sequence is that of Aspartate carbamoyltransferase regulatory chain from Cronobacter sakazakii (strain ATCC BAA-894) (Enterobacter sakazakii).